A 460-amino-acid chain; its full sequence is Endoglucanase C (460 aa).

The signal sequence occupies residues 1-32 (MIKGSSLKRFKSLVMAAIFSVSIISTAIASSA). E99 functions as the Proton donor in the catalytic mechanism. The active-site Nucleophile is the D155. The Dockerin domain maps to 400–460 (KPDLKGDVNN…FAQLKVKLLN (61 aa)).

Belongs to the glycosyl hydrolase 8 (cellulase D) family. Monomer. Post-translationally, there are two forms of the cellulase. The shorter form lacks probably the C-terminal reiterated domains.

The enzyme catalyses Endohydrolysis of (1-&gt;4)-beta-D-glucosidic linkages in cellulose, lichenin and cereal beta-D-glucans.. Its pathway is glycan metabolism; cellulose degradation. In terms of biological role, the biological conversion of cellulose to glucose generally requires three types of hydrolytic enzymes: (1) Endoglucanases which cut internal beta-1,4-glucosidic bonds; (2) Exocellobiohydrolases that cut the disaccharide cellobiose from the non-reducing end of the cellulose polymer chain; (3) Beta-1,4-glucosidases which hydrolyze the cellobiose and other short cello-oligosaccharides to glucose. The chain is Endoglucanase C (celCCC) from Ruminiclostridium cellulolyticum (strain ATCC 35319 / DSM 5812 / JCM 6584 / H10) (Clostridium cellulolyticum).